The chain runs to 638 residues: Neuroendocrine convertase 2 (638 aa).

A signal peptide spans 1–25 (MKGGCVSQWKAAAGLLFCVTVFASA). Residues 26–109 (ERPVFTNHFL…QQEGFDRKKR (84 aa)) constitute a propeptide that is removed on maturation. The 325-residue stretch at 129 to 453 (QWYLINTGQA…YGVLDAGAMV (325 aa)) folds into the Peptidase S8 domain. Catalysis depends on charge relay system residues Asp-167 and His-208. Disulfide bonds link Cys-225–Cys-376 and Cys-317–Cys-347. Asn-375 carries an N-linked (GlcNAc...) asparagine glycan. Ser-384 serves as the catalytic Charge relay system. The region spanning 461–597 (TVPERFHCVG…TLMLHGSQSA (137 aa)) is the P/Homo B domain. Cysteines 468 and 494 form a disulfide. 2 N-linked (GlcNAc...) asparagine glycosylation sites follow: Asn-514 and Asn-524.

It belongs to the peptidase S8 family. Furin subfamily.

The protein localises to the cytoplasmic vesicle. The protein resides in the secretory vesicle. It localises to the secreted. It carries out the reaction Release of protein hormones and neuropeptides from their precursors, generally by hydrolysis of -Lys-Arg-|- bonds.. Functionally, serine endopeptidase which is involved in the processing of hormone and other protein precursors at sites comprised of pairs of basic amino acid residues. Responsible for the release of glucagon from proglucagon in pancreatic A cells. The chain is Neuroendocrine convertase 2 (PCSK2) from Sus scrofa (Pig).